A 490-amino-acid polypeptide reads, in one-letter code: Cytochrome P450 monooxygenase anuE (490 aa).

Cysteine 405 serves as a coordination point for heme.

It belongs to the cytochrome P450 family. It depends on heme as a cofactor.

The enzyme catalyses 2-hydroxymethyl-3-pentylphenol + reduced [NADPH--hemoprotein reductase] + O2 = (8S)-annullatin E + oxidized [NADPH--hemoprotein reductase] + H2O + H(+). It functions in the pathway secondary metabolite biosynthesis. In terms of biological role, cytochrome P450 monooxygenase; part of the gene cluster that mediates the biosynthesis of annullatin D, an alkylated aromatic polyketide with a fused dihydrobenzofuran lactone ring system that exhibits potent agonistic activities toward the cannabinoid receptors. Within the pathway, anuE catalyzes the hydroxylation of 2-hydroxymethyl-3-pentylphenol at the side chain to produce (8S)-annullatin E. The annullatin backbone 2-hydroxymethyl-3-pentylphenol is assembled from one acetyl-CoA starter unit and 5 malonyl-CoA elongation units by cooperation of the highly reducing polyketide synthase anuA, the short-chain dehydrogenase anuB and the oxidoreductase anuC, before being hydroxylated at the C-5 alkyl chain by the cytochrome P450 monooxygenase anuE to form (8S)-annullatin E. The prenyltransferase anuH subsequently installs one isoprenyl group at the benzene ring to form (8S)-annullatin J. Enzymatic or nonenzymatic dihydro-benzofuran ring formation between the prenyl and the phenolic hydroxyl groups in (8S)-annullatin J results in two diastereomers (2S,9S)-annullatin H and compound 12. The intermediate (2S,9S)-annullatin H is then converted to (2S,9S)-annullatin D by the FAD-linked oxidoreductase anuG-catalyzed five-member lactone ring formation. The isomer 12 acts as a substrate for the short-chain dehydrogenase anuF and is oxidized to (2R)-annullatin F, which is subsequently acetylated by an acetyltransferase leading to (2R)-annullatin G formation. The remaining enzymes identified within the cluster, anuD, anuI and anuJ, seem not to be involved in annullatin biosynthesis. The polypeptide is Cytochrome P450 monooxygenase anuE (Penicillium roqueforti (strain FM164)).